The chain runs to 605 residues: Leucine-rich repeat-containing protein 40 (605 aa).

The tract at residues 1–21 (MSRFKRGGKAPDPLSGFRAPK) is disordered. LRR repeat units lie at residues 83 to 104 (DLTKLILASNKLQALSEDISLL), 106 to 127 (ALVVLDIHDNQIASLPCAIREL), 129 to 151 (NLQKLNISHNKIKQLPNELQHLQ), 152 to 173 (NLKSFLLQHNQLEELPDSIGHL), 175 to 196 (ILEELDVSNNCLRSVSSSVGQL), 198 to 219 (GLVKFNLSSNKLTALPTEIGKM), 221 to 242 (NLRQLDCTSNLLENVPASVAGM), 244 to 265 (SLEQLYLRQNKLTYLPELPFLT), 266 to 287 (KLKELHVGNNQIQTLGPEHLQN), 290 to 311 (SLSVLELRYNKLKVLPKEISLL), 313 to 335 (GLERLDLSNNDIGSLPDTLGSLP), 336 to 357 (NLKSLQLDGNPLRGIRRDILNK), 429 to 450 (PITTVNFSKNQLTEVPARIVEM), 453 to 475 (SVYDVNLGFNKISSISLNLCMLL), 476 to 497 (KLTHLDMRNNALASLPPEMEAL), 499 to 520 (RLQSIILSFNRFKHFPDVLYTI), 522 to 543 (NLETILISSNQIGSIDPIQLKK), 546 to 567 (KLSTLDLQNNDLLQIPPALGNC), and 569 to 590 (SLRALHLEGNPFRNPRATILAK).

The polypeptide is Leucine-rich repeat-containing protein 40 (lrrc40) (Xenopus laevis (African clawed frog)).